Reading from the N-terminus, the 187-residue chain is MTGPPRLSSDLDALLRRVAGHDQAAFAEFYDHTKSRVYGLVMRVLRDTGYSEETTQEIYLEVWRNASEFDSAKGSALAWLLTMAHRRAVDRVRCEQAGNQREVRYGAANVDPASDVVADLAIAGDERRRVTECLKALTDTQRQCIELAYYGGLTYVEVSRRLAANLSTIKSRMRDALRSLRNCLDVS.

A sigma-70 factor domain-2 region spans residues 30–96; it reads YDHTKSRVYG…RAVDRVRCEQ (67 aa). An Interaction with polymerase core subunit RpoC motif is present at residues 53 to 56; the sequence is ETTQ. The interval 133–182 is sigma-70 factor domain-4; that stretch reads CLKALTDTQRQCIELAYYGGLTYVEVSRRLAANLSTIKSRMRDALRSLRN. Residues 155 to 174 constitute a DNA-binding region (H-T-H motif); sequence YVEVSRRLAANLSTIKSRMR.

It belongs to the sigma-70 factor family. ECF subfamily. Interacts transiently with the RNA polymerase catalytic core formed by RpoA, RpoB, RpoC and RpoZ (2 alpha, 1 beta, 1 beta' and 1 omega subunit) to form the RNA polymerase holoenzyme that can initiate transcription. Interacts (via sigma-70 factor domain 4) with anti-sigma-K factor RskA.

Its function is as follows. Sigma factors are initiation factors that promote the attachment of RNA polymerase to specific initiation sites and are then released. Extracytoplasmic function (ECF) sigma factors are held in an inactive form by an anti-sigma factor until released by regulated intramembrane proteolysis. In Mycobacterium tuberculosis (strain ATCC 25177 / H37Ra), this protein is ECF RNA polymerase sigma factor SigK (sigK).